Here is a 256-residue protein sequence, read N- to C-terminus: Ethylene-responsive transcription factor ERF084 (256 aa).

Positions 115-172 (GFMGVRKRPWGRWSAEIRDRIGRCRHWLGTFDTAEEAARAYDAAARRLRGTKAKTNFV) form a DNA-binding region, AP2/ERF.

This sequence belongs to the AP2/ERF transcription factor family. ERF subfamily.

It is found in the nucleus. In terms of biological role, probably acts as a transcriptional activator. Binds to the GCC-box pathogenesis-related promoter element. May be involved in the regulation of gene expression by stress factors and by components of stress signal transduction pathways. The sequence is that of Ethylene-responsive transcription factor ERF084 (ERF084) from Arabidopsis thaliana (Mouse-ear cress).